Reading from the N-terminus, the 228-residue chain is Cytochrome c oxidase subunit 2 (228 aa).

Topologically, residues 1 to 26 (MTTWANMNLQDSASPIMEQLIYFHDH) are mitochondrial intermembrane. Residues 27–48 (ALMIIIMILMVVSYMMIAMVFN) traverse the membrane as a helical segment. Topologically, residues 49-62 (KYINRFLLEGQMIE) are mitochondrial matrix. Residues 63–82 (LAWTIAPAVILIFIAVPSLR) traverse the membrane as a helical segment. Over 83–228 (LLYLMDEINT…FINWILKMNM (146 aa)) the chain is Mitochondrial intermembrane. 6 residues coordinate Cu cation: His-161, Cys-196, Glu-198, Cys-200, His-204, and Met-207. Residue Glu-198 participates in Mg(2+) binding.

The protein belongs to the cytochrome c oxidase subunit 2 family. In terms of assembly, component of the cytochrome c oxidase (complex IV, CIV), a multisubunit enzyme composed of a catalytic core of 3 subunits and several supernumerary subunits. The complex exists as a monomer or a dimer and forms supercomplexes (SCs) in the inner mitochondrial membrane with ubiquinol-cytochrome c oxidoreductase (cytochrome b-c1 complex, complex III, CIII). Cu cation is required as a cofactor.

The protein resides in the mitochondrion inner membrane. The enzyme catalyses 4 Fe(II)-[cytochrome c] + O2 + 8 H(+)(in) = 4 Fe(III)-[cytochrome c] + 2 H2O + 4 H(+)(out). Component of the cytochrome c oxidase, the last enzyme in the mitochondrial electron transport chain which drives oxidative phosphorylation. The respiratory chain contains 3 multisubunit complexes succinate dehydrogenase (complex II, CII), ubiquinol-cytochrome c oxidoreductase (cytochrome b-c1 complex, complex III, CIII) and cytochrome c oxidase (complex IV, CIV), that cooperate to transfer electrons derived from NADH and succinate to molecular oxygen, creating an electrochemical gradient over the inner membrane that drives transmembrane transport and the ATP synthase. Cytochrome c oxidase is the component of the respiratory chain that catalyzes the reduction of oxygen to water. Electrons originating from reduced cytochrome c in the intermembrane space (IMS) are transferred via the dinuclear copper A center (CU(A)) of subunit 2 and heme A of subunit 1 to the active site in subunit 1, a binuclear center (BNC) formed by heme A3 and copper B (CU(B)). The BNC reduces molecular oxygen to 2 water molecules using 4 electrons from cytochrome c in the IMS and 4 protons from the mitochondrial matrix. The protein is Cytochrome c oxidase subunit 2 (COII) of Periplaneta americana (American cockroach).